A 396-amino-acid chain; its full sequence is Elongation factor Tu (396 aa).

The 197-residue stretch at 10 to 206 folds into the tr-type G domain; the sequence is KPHCNIGTIG…AVDAYIPQPE (197 aa). Positions 19–26 are G1; that stretch reads GHVDHGKT. Position 19 to 26 (19 to 26) interacts with GTP; sequence GHVDHGKT. Residue Thr-26 participates in Mg(2+) binding. The tract at residues 60–64 is G2; sequence GITIS. Residues 81–84 are G3; it reads DCPG. GTP contacts are provided by residues 81–85 and 136–139; these read DCPGH and NKCD. The G4 stretch occupies residues 136–139; sequence NKCD. Residues 174–176 are G5; that stretch reads SAL.

Belongs to the TRAFAC class translation factor GTPase superfamily. Classic translation factor GTPase family. EF-Tu/EF-1A subfamily. In terms of assembly, monomer.

Its subcellular location is the cytoplasm. It catalyses the reaction GTP + H2O = GDP + phosphate + H(+). Functionally, GTP hydrolase that promotes the GTP-dependent binding of aminoacyl-tRNA to the A-site of ribosomes during protein biosynthesis. This is Elongation factor Tu from Nitrobacter hamburgensis (strain DSM 10229 / NCIMB 13809 / X14).